Here is a 236-residue protein sequence, read N- to C-terminus: tRNA (guanine-N(1)-)-methyltransferase (236 aa).

S-adenosyl-L-methionine-binding positions include glycine 116 and 136–141 (LGDFVL).

It belongs to the RNA methyltransferase TrmD family. In terms of assembly, homodimer.

The protein localises to the cytoplasm. It catalyses the reaction guanosine(37) in tRNA + S-adenosyl-L-methionine = N(1)-methylguanosine(37) in tRNA + S-adenosyl-L-homocysteine + H(+). In terms of biological role, specifically methylates guanosine-37 in various tRNAs. The sequence is that of tRNA (guanine-N(1)-)-methyltransferase from Thiobacillus denitrificans (strain ATCC 25259 / T1).